We begin with the raw amino-acid sequence, 502 residues long: 4,4'-diapophytoene desaturase (4,4'-diaponeurosporene-forming) (502 aa).

5 to 17 (VIGAGVTGLAAAA) contacts FAD.

The protein belongs to the carotenoid/retinoid oxidoreductase family. CrtN subfamily.

It catalyses the reaction 15-cis-4,4'-diapophytoene + 3 FAD + 3 H(+) = all-trans-4,4'-diaponeurosporene + 3 FADH2. Its pathway is carotenoid biosynthesis; staphyloxanthin biosynthesis; staphyloxanthin from farnesyl diphosphate: step 2/5. Functionally, involved in the biosynthesis of the yellow-orange carotenoid staphyloxanthin, which plays a role in the virulence via its protective function against oxidative stress. Catalyzes three successive dehydrogenation reactions that lead to the introduction of three double bonds into 4,4'-diapophytoene (dehydrosqualene), with 4,4'-diapophytofluene and 4,4'-diapo-zeta-carotene as intermediates, and 4,4'-diaponeurosporene (the major deep-yellow pigment in staphylococci strains) as the end product. This is 4,4'-diapophytoene desaturase (4,4'-diaponeurosporene-forming) from Staphylococcus aureus (strain bovine RF122 / ET3-1).